The sequence spans 478 residues: MSKYETVIGLEVHAELSTNSKIFCGCPTEFGAPPNTHTCPICLGHPGVLPVTNKQAVEFAMKAALALNCEISRETKFDRKNYFYPDSPKAYQISQFDQPIGYNGWIDIEVNGETKRIGITRLHLEEDAGKLTHSDFGGESLVDFNRVGVPLVEIVSEPDIRTPEEARAYLEKLKAIIQYTEVSDVRMEQGSLRCDANVSIRPYGQEEFGTKAELKNMNSFRNVQMGLEYEVLRQTEVVSSGGKVVQETRRWDEANKKTLTMRSKEEAHDYRYFPDPDLVRMQISEEWIEAVRATIPELPDARQARYVNEFGLSKDDAGVITISKETADFFDETVKTGAEPKSVANWLMVDLLAHLNANNLVFADVKMTPKGLGEMIKLIEDGTISSKIAKTVFKEMVETGKEPKQIVEEKGLVQISDEGALRQVVVDAVNSNPQAVADFKSGNEKAAAFFVGQVMKQTKGKANPGMVNKLIQEVLNSL.

This sequence belongs to the GatB/GatE family. GatB subfamily. As to quaternary structure, heterotrimer of A, B and C subunits.

The enzyme catalyses L-glutamyl-tRNA(Gln) + L-glutamine + ATP + H2O = L-glutaminyl-tRNA(Gln) + L-glutamate + ADP + phosphate + H(+). The catalysed reaction is L-aspartyl-tRNA(Asn) + L-glutamine + ATP + H2O = L-asparaginyl-tRNA(Asn) + L-glutamate + ADP + phosphate + 2 H(+). Allows the formation of correctly charged Asn-tRNA(Asn) or Gln-tRNA(Gln) through the transamidation of misacylated Asp-tRNA(Asn) or Glu-tRNA(Gln) in organisms which lack either or both of asparaginyl-tRNA or glutaminyl-tRNA synthetases. The reaction takes place in the presence of glutamine and ATP through an activated phospho-Asp-tRNA(Asn) or phospho-Glu-tRNA(Gln). The polypeptide is Aspartyl/glutamyl-tRNA(Asn/Gln) amidotransferase subunit B (Brevibacillus brevis (strain 47 / JCM 6285 / NBRC 100599)).